We begin with the raw amino-acid sequence, 256 residues long: Lysosomal membrane ascorbate-dependent ferrireductase CYB561A3 (256 aa).

Residues 1–3 lie on the Cytoplasmic side of the membrane; it reads MAS. The chain crosses the membrane as a helical span at residues 4 to 24; the sequence is GWFYMSCMVLGSLGSMCILFT. Residues 12-219 enclose the Cytochrome b561 domain; the sequence is VLGSLGSMCI…FGLLVLYILL (208 aa). Over 25-40 the chain is Lumenal; that stretch reads TYWMQYWRGGFAWDGT. Residues 41 to 61 traverse the membrane as a helical segment; sequence VLMFNWHPVLMVSGMVVLYGA. Heme b contacts are provided by histidine 47 and arginine 67. Residues 62 to 83 are Cytoplasmic-facing; sequence ASLVYRLPASWVGPKLPWKVLH. Lysine 76 and lysine 80 together coordinate L-ascorbate. Heme b is bound at residue histidine 83. A helical transmembrane segment spans residues 84–104; that stretch reads AALHLLAFTVTVVGLTAVFGF. Over 105 to 119 the chain is Lumenal; it reads HNHSKITHLYSLHSW. Residue asparagine 106 is glycosylated (N-linked (GlcNAc...) asparagine). Heme b-binding positions include 112-115 and histidine 117; that span reads HLYS. A helical transmembrane segment spans residues 120 to 140; the sequence is LGITTVALFACQWFLGFAVFL. Topologically, residues 141–154 are cytoplasmic; it reads LPWASQWLRSLLKP. Residue arginine 149 coordinates L-ascorbate. The helical transmembrane segment at 155-175 threads the bilayer; it reads VHVFFGACILSLSIASVISGI. Histidine 156 and glutamate 177 together coordinate heme b. At 176 to 202 the chain is on the lumenal side; it reads NEKLFFVLKNATRPYSSLPGEAVFANS. A helical membrane pass occupies residues 203-223; the sequence is TGILVVSFGLLVLYILLASSW. Residue arginine 224 participates in heme b binding. The Cytoplasmic portion of the chain corresponds to 224–256; the sequence is RRPDPGALTDRQVWLLVSHYRWDKAKKACFAPC.

In terms of assembly, homodimer. Requires heme b as cofactor. In terms of processing, N-glycosylated.

It localises to the late endosome membrane. Its subcellular location is the lysosome membrane. The enzyme catalyses Fe(3+)(out) + L-ascorbate(in) = monodehydro-L-ascorbate radical(in) + Fe(2+)(out) + H(+). Its function is as follows. Transmembrane reductase that uses ascorbate as an electron donor in the cytoplasm and transfers electrons across membranes to reduce iron cations Fe(3+) into Fe(2+) in the lumen of the late endosome and lysosome. Reduced iron can then be extruded from the late endosome and lysosome to the cytoplasm by divalent metal-specific transporters. It is therefore most probably involved in endosomal and lysosomal cellular iron homeostasis. This Rattus norvegicus (Rat) protein is Lysosomal membrane ascorbate-dependent ferrireductase CYB561A3.